The chain runs to 89 residues: Small ribosomal subunit protein uS17 (89 aa).

This sequence belongs to the universal ribosomal protein uS17 family. As to quaternary structure, part of the 30S ribosomal subunit.

In terms of biological role, one of the primary rRNA binding proteins, it binds specifically to the 5'-end of 16S ribosomal RNA. The chain is Small ribosomal subunit protein uS17 from Xylella fastidiosa (strain 9a5c).